The chain runs to 320 residues: Ferrochelatase (320 aa).

Fe cation contacts are provided by H194 and E275.

Belongs to the ferrochelatase family. As to quaternary structure, monomer.

The protein localises to the cytoplasm. The catalysed reaction is heme b + 2 H(+) = protoporphyrin IX + Fe(2+). The protein operates within porphyrin-containing compound metabolism; protoheme biosynthesis; protoheme from protoporphyrin-IX: step 1/1. Functionally, catalyzes the ferrous insertion into protoporphyrin IX. The protein is Ferrochelatase of Escherichia coli O9:H4 (strain HS).